A 223-amino-acid polypeptide reads, in one-letter code: Phosphoribosylformylglycinamidine synthase subunit PurQ (223 aa).

A Glutamine amidotransferase type-1 domain is found at 3 to 223 (FAVLVFPGSN…MVNSWREQNV (221 aa)). Cysteine 85 acts as the Nucleophile in catalysis. Residues histidine 193 and glutamate 195 contribute to the active site.

Part of the FGAM synthase complex composed of 1 PurL, 1 PurQ and 2 PurS subunits.

The protein localises to the cytoplasm. The catalysed reaction is N(2)-formyl-N(1)-(5-phospho-beta-D-ribosyl)glycinamide + L-glutamine + ATP + H2O = 2-formamido-N(1)-(5-O-phospho-beta-D-ribosyl)acetamidine + L-glutamate + ADP + phosphate + H(+). It catalyses the reaction L-glutamine + H2O = L-glutamate + NH4(+). It functions in the pathway purine metabolism; IMP biosynthesis via de novo pathway; 5-amino-1-(5-phospho-D-ribosyl)imidazole from N(2)-formyl-N(1)-(5-phospho-D-ribosyl)glycinamide: step 1/2. Part of the phosphoribosylformylglycinamidine synthase complex involved in the purines biosynthetic pathway. Catalyzes the ATP-dependent conversion of formylglycinamide ribonucleotide (FGAR) and glutamine to yield formylglycinamidine ribonucleotide (FGAM) and glutamate. The FGAM synthase complex is composed of three subunits. PurQ produces an ammonia molecule by converting glutamine to glutamate. PurL transfers the ammonia molecule to FGAR to form FGAM in an ATP-dependent manner. PurS interacts with PurQ and PurL and is thought to assist in the transfer of the ammonia molecule from PurQ to PurL. This Staphylococcus haemolyticus (strain JCSC1435) protein is Phosphoribosylformylglycinamidine synthase subunit PurQ.